Consider the following 185-residue polypeptide: Large ribosomal subunit protein uL5 (185 aa).

The protein belongs to the universal ribosomal protein uL5 family. In terms of assembly, part of the 50S ribosomal subunit; part of the 5S rRNA/L5/L18/L25 subcomplex. Contacts the 5S rRNA and the P site tRNA. Forms a bridge to the 30S subunit in the 70S ribosome.

Functionally, this is one of the proteins that bind and probably mediate the attachment of the 5S RNA into the large ribosomal subunit, where it forms part of the central protuberance. In the 70S ribosome it contacts protein S13 of the 30S subunit (bridge B1b), connecting the 2 subunits; this bridge is implicated in subunit movement. Contacts the P site tRNA; the 5S rRNA and some of its associated proteins might help stabilize positioning of ribosome-bound tRNAs. This is Large ribosomal subunit protein uL5 from Phocaeicola vulgatus (strain ATCC 8482 / DSM 1447 / JCM 5826 / CCUG 4940 / NBRC 14291 / NCTC 11154) (Bacteroides vulgatus).